We begin with the raw amino-acid sequence, 293 residues long: Ribosomal protein L11 methyltransferase (293 aa).

The S-adenosyl-L-methionine site is built by Thr145, Gly166, Asp188, and Asn230.

This sequence belongs to the methyltransferase superfamily. PrmA family.

It is found in the cytoplasm. It catalyses the reaction L-lysyl-[protein] + 3 S-adenosyl-L-methionine = N(6),N(6),N(6)-trimethyl-L-lysyl-[protein] + 3 S-adenosyl-L-homocysteine + 3 H(+). Methylates ribosomal protein L11. This Pasteurella multocida (strain Pm70) protein is Ribosomal protein L11 methyltransferase.